A 30-amino-acid chain; its full sequence is U10-ctenitoxin-Co1b (30 aa).

2 cysteine pairs are disulfide-bonded: C2/C17 and C9/C22.

Expressed by the venom gland.

It is found in the secreted. In terms of biological role, antagonist of L-type calcium channels (Cav1/CACNA1). This chain is U10-ctenitoxin-Co1b, found in Ctenus ornatus (Brazilian spider).